A 156-amino-acid chain; its full sequence is Ribosomal RNA large subunit methyltransferase H (156 aa).

S-adenosyl-L-methionine is bound by residues leucine 73, glycine 104, and 123–128; that span reads VSSLTL.

It belongs to the RNA methyltransferase RlmH family. Homodimer.

Its subcellular location is the cytoplasm. It carries out the reaction pseudouridine(1915) in 23S rRNA + S-adenosyl-L-methionine = N(3)-methylpseudouridine(1915) in 23S rRNA + S-adenosyl-L-homocysteine + H(+). Functionally, specifically methylates the pseudouridine at position 1915 (m3Psi1915) in 23S rRNA. This is Ribosomal RNA large subunit methyltransferase H from Paraburkholderia phymatum (strain DSM 17167 / CIP 108236 / LMG 21445 / STM815) (Burkholderia phymatum).